The chain runs to 284 residues: MPDYTWFEGIPFHAFGISKETLQNVCNKFVVKDEDLILLAYPKSGTNWLIEIVCLIQTKGDPKWIQSVTIWDRSPWIETDLGYDMLIKKKGPRLITSHLPMHLFSKSLFSSKAKVIYLVRNPRDVLVSGYYFWGNSTLAKKPDSLGTYVEWFLKGNVLYGSWFEHIRAWLSMREWDNFLLLYYEDMKKDTMGTIKKICDFLGKKLEPDELDLVLKYSSFQVMKENDMSNYSLLMKKSIFTGIGLMRKGTVGDWKNHFTVSQAEAFDKVFQEKMAGFPPGMFPWE.

Positions 43, 44, 45, 46, 47, and 48 each coordinate 3'-phosphoadenylyl sulfate. The active-site Proton acceptor is the histidine 98. 8 residues coordinate 3'-phosphoadenylyl sulfate: arginine 120, serine 128, tyrosine 183, serine 217, methionine 222, arginine 246, lysine 247, and glycine 248.

This sequence belongs to the sulfotransferase 1 family. As to quaternary structure, homodimer.

It localises to the cytoplasm. The enzyme catalyses an alcohol + 3'-phosphoadenylyl sulfate = an alkyl sulfate + adenosine 3',5'-bisphosphate + H(+). The catalysed reaction is taurolithocholate + 3'-phosphoadenylyl sulfate = taurolithocholate 3-sulfate + adenosine 3',5'-bisphosphate + H(+). It catalyses the reaction lithocholate + 3'-phosphoadenylyl sulfate = lithocholate sulfate + adenosine 3',5'-bisphosphate + H(+). It carries out the reaction (24S)-hydroxycholesterol + 3'-phosphoadenylyl sulfate = (24S)-hydroxycholesterol 24-sulfate + adenosine 3',5'-bisphosphate + H(+). The enzyme catalyses (24S)-hydroxycholesterol + 3'-phosphoadenylyl sulfate = (24S)-hydroxycholesterol 3-sulfate + adenosine 3',5'-bisphosphate + H(+). The catalysed reaction is (24S)-hydroxycholesterol 24-sulfate + 3'-phosphoadenylyl sulfate = (24S)-hydroxycholesterol 3,24-disulfate + adenosine 3',5'-bisphosphate + H(+). It catalyses the reaction 3beta-hydroxyandrost-5-en-17-one + 3'-phosphoadenylyl sulfate = dehydroepiandrosterone 3-sulfate + adenosine 3',5'-bisphosphate + H(+). It carries out the reaction pregnenolone + 3'-phosphoadenylyl sulfate = pregnenolone sulfate + adenosine 3',5'-bisphosphate + H(+). The enzyme catalyses androsterone + 3'-phosphoadenylyl sulfate = androsterone 3alpha-sulfate + adenosine 3',5'-bisphosphate + H(+). Sulfotransferase that utilizes 3'-phospho-5'-adenylyl sulfate (PAPS) as sulfonate donor to catalyze the sulfonation of steroids and bile acids in the liver and adrenal glands. Mediates the sulfation of a wide range of steroids and sterols, including pregnenolone, androsterone, DHEA, bile acids, cholesterol and as well many xenobiotics that contain alcohol and phenol functional groups. Sulfonation increases the water solubility of most compounds, and therefore their renal excretion, but it can also result in bioactivation to form active metabolites. Plays an important role in maintening steroid and lipid homeostasis. Plays a key role in bile acid metabolism. In addition, catalyzes the metabolic activation of potent carcinogenic polycyclic arylmethanols. The protein is Sulfotransferase 2A1 (Sult2a1) of Rattus norvegicus (Rat).